Consider the following 354-residue polypeptide: Homer protein homolog 1 (354 aa).

The WH1 domain occupies 1–110 (MGEQPIFSTR…EKFQEFKEAA (110 aa)). Glycine 2 bears the N-acetylglycine mark. Positions 114-173 (KEKSQEKMELTSTPSQESAGGDLQSPLTPESINGTDDERTPDVTQNSEPRAEPTQNALPF) are disordered. 2 stretches are compositionally biased toward polar residues: residues 138–147 (SPLTPESING) and 155–173 (DVTQ…ALPF). A coiled-coil region spans residues 181 to 352 (KHWEAELATL…LRDNLAKLLE (172 aa)). Residues 290-354 (KLQEVEIRNK…DNLAKLLECS (65 aa)) are required for tetramerization. Serine 306 carries the post-translational modification Phosphoserine.

The protein belongs to the Homer family. In terms of assembly, tetramer; this tetrameric structure is critical for forming the high-order complex with SHANK1, which in turn is necessary for the structural and functional integrity of dendritic spines. Interacts with GRM1, GRM5, ITPR1, DNM3, RYR1, RYR2 and SHANK3. Interacts with IFT57 and OPHN1. Isoform 1 encodes a coiled-coil structure that mediates homo- and heteromultimerization. Interacts with SHANK1; forms high-order polymerized complex with a mesh-like network structure, at least composed of SHANK1, HOMER1 and DLGAP1; the complex formation is SHANK1 multimerization dependent. Interacts with NFATC4. Interacts with DAGLA (via PPXXF motif); this interaction is required for the cell membrane localization of DAGLA. Interacts with SRGAP2.

The protein localises to the cytoplasm. It is found in the postsynaptic density. The protein resides in the synapse. It localises to the cell projection. Its subcellular location is the dendritic spine. Functionally, postsynaptic density scaffolding protein. Binds and cross-links cytoplasmic regions of GRM1, GRM5, ITPR1, DNM3, RYR1, RYR2, SHANK1 and SHANK3. By physically linking GRM1 and GRM5 with ER-associated ITPR1 receptors, it aids the coupling of surface receptors to intracellular calcium release. May also couple GRM1 to PI3 kinase through its interaction with AGAP2. Isoform 1 regulates the trafficking and surface expression of GRM5. Isoform 3 acts as a natural dominant negative, in dynamic competition with constitutively expressed isoform 1 to regulate synaptic metabotropic glutamate function. Isoform 3, may be involved in the structural changes that occur at synapses during long-lasting neuronal plasticity and development. Forms a high-order complex with SHANK1, which in turn is necessary for the structural and functional integrity of dendritic spines. Negatively regulates T cell activation by inhibiting the calcineurin-NFAT pathway. Acts by competing with calcineurin/PPP3CA for NFAT protein binding, hence preventing NFAT activation by PPP3CA. This chain is Homer protein homolog 1, found in Homo sapiens (Human).